Consider the following 544-residue polypeptide: Putative lipase ATG15 (544 aa).

Topologically, residues 1–45 (MVADFDSGWYEGAGDELGQGARNGVLRERLGGNEKAQVVRSRRKA) are cytoplasmic. The chain crosses the membrane as a helical; Signal-anchor for type II membrane protein span at residues 46-66 (VAWNVLMVLGLILYVLYSACF). Topologically, residues 67-544 (AQARQWWRTN…NWFGYCTEYA (478 aa)) are lumenal. N-linked (GlcNAc...) asparagine glycosylation is found at Asn-200, Asn-229, and Asn-234. The active-site Charge relay system is Ser-362. Positions 508 to 530 (PMPSSVASKPTPTPTSPGSPSST) are disordered.

This sequence belongs to the AB hydrolase superfamily. Lipase family. Binds to both phosphatidylinositol (PI) and phosphatidylinositol 3,5-bisphosphate (PIP2).

It localises to the endosome. The protein resides in the multivesicular body membrane. It is found in the prevacuolar compartment membrane. The enzyme catalyses a triacylglycerol + H2O = a diacylglycerol + a fatty acid + H(+). Its function is as follows. Lipase which is essential for lysis of subvacuolar cytoplasm to vacuole targeted bodies and intravacuolar autophagic bodies. Involved in the lysis of intravacuolar multivesicular body (MVB) vesicles. The intravacuolar membrane disintegration by ATG15 is critical to life span extension. The protein is Putative lipase ATG15 (ATG15) of Eremothecium gossypii (strain ATCC 10895 / CBS 109.51 / FGSC 9923 / NRRL Y-1056) (Yeast).